The primary structure comprises 332 residues: L-lactate dehydrogenase A chain (332 aa).

N-acetylalanine is present on A2. N6-acetyllysine; alternate is present on K5. K5 is modified (N6-succinyllysine; alternate). N6-acetyllysine is present on K14. 29 to 57 is a binding site for NAD(+); sequence GAVGMACAISILMKDLADELALVDVMEDK. N6-acetyllysine; alternate is present on K57. A Glycyl lysine isopeptide (Lys-Gly) (interchain with G-Cter in SUMO2); alternate cross-link involves residue K57. K81 bears the N6-acetyllysine mark. Position 99 (R99) interacts with NAD(+). R106 is a binding site for substrate. K118 is modified (N6-acetyllysine; alternate). K118 is subject to N6-succinyllysine; alternate. K126 carries the post-translational modification N6-acetyllysine. N138 is a binding site for NAD(+). Substrate is bound by residues N138 and R169. H193 acts as the Proton acceptor in catalysis. K224 and K232 each carry N6-acetyllysine. At Y239 the chain carries Phosphotyrosine. At K243 the chain carries N6-acetyllysine. T248 lines the substrate pocket. T309 bears the Phosphothreonine mark. The residue at position 310 (S310) is a Phosphoserine. The residue at position 318 (K318) is an N6-acetyllysine; alternate. An N6-succinyllysine; alternate modification is found at K318. Position 322 is a phosphothreonine (T322).

The protein belongs to the LDH/MDH superfamily. LDH family. Homotetramer. Interacts with PTEN upstream reading frame protein MP31. In terms of processing, ISGylated.

It is found in the cytoplasm. It catalyses the reaction (S)-lactate + NAD(+) = pyruvate + NADH + H(+). It functions in the pathway fermentation; pyruvate fermentation to lactate; (S)-lactate from pyruvate: step 1/1. Its function is as follows. Interconverts simultaneously and stereospecifically pyruvate and lactate with concomitant interconversion of NADH and NAD(+). The protein is L-lactate dehydrogenase A chain (LDHA) of Oryctolagus cuniculus (Rabbit).